We begin with the raw amino-acid sequence, 718 residues long: Polyphosphate kinase (718 aa).

Asparagine 47 contributes to the ATP binding site. Mg(2+) contacts are provided by arginine 372 and arginine 402. Catalysis depends on histidine 432, which acts as the Phosphohistidine intermediate. ATP-binding residues include tyrosine 465, arginine 561, and histidine 589. The tract at residues 683 to 718 is disordered; it reads KADHGDTTPTSNAHQFIPMMSPKNEPDASDLDREDD. Acidic residues predominate over residues 709 to 718; that stretch reads DASDLDREDD.

Belongs to the polyphosphate kinase 1 (PPK1) family. Requires Mg(2+) as cofactor. An intermediate of this reaction is the autophosphorylated ppk in which a phosphate is covalently linked to a histidine residue through a N-P bond.

The catalysed reaction is [phosphate](n) + ATP = [phosphate](n+1) + ADP. In terms of biological role, catalyzes the reversible transfer of the terminal phosphate of ATP to form a long-chain polyphosphate (polyP). The sequence is that of Polyphosphate kinase from Lactiplantibacillus plantarum (strain ATCC BAA-793 / NCIMB 8826 / WCFS1) (Lactobacillus plantarum).